A 58-amino-acid chain; its full sequence is Conotoxin Ar5.4 (58 aa).

The propeptide occupies 1–20 (RIQSDLIRAALEDADMKNEK).

Belongs to the conotoxin T superfamily. Contains 2 disulfide bonds that can be either 'C1-C3, C2-C4' or 'C1-C4, C2-C3', since these disulfide connectivities have been observed for conotoxins with cysteine framework V (for examples, see AC P0DQQ7 and AC P81755). Expressed by the venom duct.

It is found in the secreted. The polypeptide is Conotoxin Ar5.4 (Conus arenatus (Sand-dusted cone)).